The primary structure comprises 440 residues: Chromosome partition protein MukF (440 aa).

The segment at 208–236 is leucine-zipper; the sequence is LSETSGTLRELQDTLEAAGDKLQANLLRI.

This sequence belongs to the MukF family. As to quaternary structure, interacts, and probably forms a ternary complex, with MukE and MukB via its C-terminal region. The complex formation is stimulated by calcium or magnesium. It is required for an interaction between MukE and MukB.

The protein resides in the cytoplasm. It is found in the nucleoid. In terms of biological role, involved in chromosome condensation, segregation and cell cycle progression. May participate in facilitating chromosome segregation by condensation DNA from both sides of a centrally located replisome during cell division. Not required for mini-F plasmid partitioning. Probably acts via its interaction with MukB and MukE. Overexpression results in anucleate cells. It has a calcium binding activity. This chain is Chromosome partition protein MukF, found in Serratia proteamaculans (strain 568).